The following is a 72-amino-acid chain: Brevinin-2GHc (72 aa).

A signal peptide spans 1 to 22; sequence MFTMKKSLLLLFFLGMISLSLC. Residues 23-42 constitute a propeptide that is removed on maturation; the sequence is EQERGADEDEGEVEEQIKRS. C64 and C70 are disulfide-bonded.

As to expression, expressed by the skin glands.

Its subcellular location is the secreted. Its function is as follows. Antimicrobial peptide. Active against the Gram-positive bacteria S.aureus FDA209P (MIC=9.8 ug/ml) and B.subtilis ATCC 6633 (MIC&gt;64 ug/ml), and the Gram-negative bacteria E.coli O111 (MIC=19.6 ug/ml) and E.coli ATCC 25922 (MIC=9.8 ug/ml). Not active against the fungus C.albicans. The polypeptide is Brevinin-2GHc (Sylvirana guentheri (Gunther's frog)).